Reading from the N-terminus, the 872-residue chain is Leucine--tRNA ligase (872 aa).

The short motif at 56–66 is the 'HIGH' region element; the sequence is PYPSGNLHMGH. A 'KMSKS' region motif is present at residues 629–633; the sequence is KMSKS. Lys632 is a binding site for ATP.

This sequence belongs to the class-I aminoacyl-tRNA synthetase family.

Its subcellular location is the cytoplasm. The catalysed reaction is tRNA(Leu) + L-leucine + ATP = L-leucyl-tRNA(Leu) + AMP + diphosphate. The sequence is that of Leucine--tRNA ligase from Prochlorococcus marinus (strain MIT 9211).